Consider the following 325-residue polypeptide: DNA-directed RNA polymerase subunit alpha (325 aa).

An alpha N-terminal domain (alpha-NTD) region spans residues 1–238; it reads MSLKSLLKGF…EHLTVFINFE (238 aa). Residues 254-325 form an alpha C-terminal domain (alpha-CTD) region; that stretch reads KLKASLSKHV…LGLSFGMRDF (72 aa).

This sequence belongs to the RNA polymerase alpha chain family. In terms of assembly, homodimer. The RNAP catalytic core consists of 2 alpha, 1 beta, 1 beta' and 1 omega subunit. When a sigma factor is associated with the core the holoenzyme is formed, which can initiate transcription.

It carries out the reaction RNA(n) + a ribonucleoside 5'-triphosphate = RNA(n+1) + diphosphate. Its function is as follows. DNA-dependent RNA polymerase catalyzes the transcription of DNA into RNA using the four ribonucleoside triphosphates as substrates. The protein is DNA-directed RNA polymerase subunit alpha of Leptospira borgpetersenii serovar Hardjo-bovis (strain JB197).